The primary structure comprises 580 residues: Arginine--tRNA ligase (580 aa).

A 'HIGH' region motif is present at residues 131–141; the sequence is ANPTGPLHVGH.

Belongs to the class-I aminoacyl-tRNA synthetase family. As to quaternary structure, monomer.

The protein resides in the cytoplasm. It catalyses the reaction tRNA(Arg) + L-arginine + ATP = L-arginyl-tRNA(Arg) + AMP + diphosphate. In Roseobacter denitrificans (strain ATCC 33942 / OCh 114) (Erythrobacter sp. (strain OCh 114)), this protein is Arginine--tRNA ligase.